Consider the following 197-residue polypeptide: uncharacterized protein (197 aa).

6 consecutive transmembrane segments (helical) span residues L5–F23, I27–F46, V55–T77, L87–I109, V116–G138, and F153–F174.

Its subcellular location is the cell membrane. This is an uncharacterized protein from Archaeoglobus fulgidus (strain ATCC 49558 / DSM 4304 / JCM 9628 / NBRC 100126 / VC-16).